The chain runs to 206 residues: Ribonuclease M5 (206 aa).

Positions 8–91 (NEVIVVEGRD…AFLNRDEARP (84 aa)) constitute a Toprim domain. Mg(2+)-binding residues include Glu14, Asp60, and Asp62.

Belongs to the ribonuclease M5 family. It depends on Mg(2+) as a cofactor.

It localises to the cytoplasm. It catalyses the reaction Endonucleolytic cleavage of RNA, removing 21 and 42 nucleotides, respectively, from the 5'- and 3'-termini of a 5S-rRNA precursor.. In terms of biological role, required for correct processing of both the 5' and 3' ends of 5S rRNA precursor. Cleaves both sides of a double-stranded region yielding mature 5S rRNA in one step. This is Ribonuclease M5 from Lactococcus lactis subsp. lactis (strain IL1403) (Streptococcus lactis).